The primary structure comprises 562 residues: Arginine--tRNA ligase (562 aa).

Positions 121–131 (PNIAKPMGMGH) match the 'HIGH' region motif.

It belongs to the class-I aminoacyl-tRNA synthetase family. Monomer.

The protein localises to the cytoplasm. The catalysed reaction is tRNA(Arg) + L-arginine + ATP = L-arginyl-tRNA(Arg) + AMP + diphosphate. The chain is Arginine--tRNA ligase from Limosilactobacillus reuteri (strain DSM 20016) (Lactobacillus reuteri).